Here is a 248-residue protein sequence, read N- to C-terminus: Probable phosphatase VF_A0065 (248 aa).

His-8, His-10, His-16, His-41, Glu-74, His-102, His-132, Asp-194, and His-196 together coordinate Zn(2+).

This sequence belongs to the PHP family. Zn(2+) serves as cofactor.

This chain is Probable phosphatase VF_A0065, found in Aliivibrio fischeri (strain ATCC 700601 / ES114) (Vibrio fischeri).